Consider the following 637-residue polypeptide: tRNA uridine 5-carboxymethylaminomethyl modification enzyme MnmG (637 aa).

Residues 15-20, isoleucine 127, and serine 182 contribute to the FAD site; that span reads GAGHAG. NAD(+) is bound at residue 276–290; sequence GPRYCPSIEDKIVRF. Glutamine 373 is a binding site for FAD.

This sequence belongs to the MnmG family. In terms of assembly, homodimer. Heterotetramer of two MnmE and two MnmG subunits. The cofactor is FAD.

Its subcellular location is the cytoplasm. NAD-binding protein involved in the addition of a carboxymethylaminomethyl (cmnm) group at the wobble position (U34) of certain tRNAs, forming tRNA-cmnm(5)s(2)U34. This chain is tRNA uridine 5-carboxymethylaminomethyl modification enzyme MnmG, found in Streptococcus pneumoniae (strain Hungary19A-6).